A 596-amino-acid polypeptide reads, in one-letter code: Elongation factor 4 (596 aa).

In terms of domain architecture, tr-type G spans 2–183 (KNIRNFSIIA…AIITRIPAPN (182 aa)). GTP contacts are provided by residues 14-19 (DHGKST) and 130-133 (NKID).

This sequence belongs to the TRAFAC class translation factor GTPase superfamily. Classic translation factor GTPase family. LepA subfamily.

The protein localises to the cell inner membrane. It catalyses the reaction GTP + H2O = GDP + phosphate + H(+). Required for accurate and efficient protein synthesis under certain stress conditions. May act as a fidelity factor of the translation reaction, by catalyzing a one-codon backward translocation of tRNAs on improperly translocated ribosomes. Back-translocation proceeds from a post-translocation (POST) complex to a pre-translocation (PRE) complex, thus giving elongation factor G a second chance to translocate the tRNAs correctly. Binds to ribosomes in a GTP-dependent manner. In Campylobacter concisus (strain 13826), this protein is Elongation factor 4.